A 472-amino-acid chain; its full sequence is Chromosomal replication initiator protein DnaA (472 aa).

Residues 1–73 (MSNMEQDRWS…LSCWQAELPE (73 aa)) form a domain I, interacts with DnaA modulators region. Residues 73–128 (EVNRVDLTVRSPVRCATPAKEVPAPVESRRDEQRPSAERSNGATPVSANHDALGGS) form a domain II region. A disordered region spans residues 90–124 (PAKEVPAPVESRRDEQRPSAERSNGATPVSANHDA). The span at 99-109 (ESRRDEQRPSA) shows a compositional bias: basic and acidic residues. Polar residues predominate over residues 110–119 (ERSNGATPVS). The interval 129–351 (PLDPRLTFAS…GAINRLLAHS (223 aa)) is domain III, AAA+ region. The ATP site is built by glycine 176, glycine 178, lysine 179, and threonine 180. The tract at residues 352–472 (KLNNQPVTLE…VESLKRQLQE (121 aa)) is domain IV, binds dsDNA.

The protein belongs to the DnaA family. In terms of assembly, oligomerizes as a right-handed, spiral filament on DNA at oriC.

The protein localises to the cytoplasm. Its function is as follows. Plays an essential role in the initiation and regulation of chromosomal replication. ATP-DnaA binds to the origin of replication (oriC) to initiate formation of the DNA replication initiation complex once per cell cycle. Binds the DnaA box (a 9 base pair repeat at the origin) and separates the double-stranded (ds)DNA. Forms a right-handed helical filament on oriC DNA; dsDNA binds to the exterior of the filament while single-stranded (ss)DNA is stabiized in the filament's interior. The ATP-DnaA-oriC complex binds and stabilizes one strand of the AT-rich DNA unwinding element (DUE), permitting loading of DNA polymerase. After initiation quickly degrades to an ADP-DnaA complex that is not apt for DNA replication. Binds acidic phospholipids. This is Chromosomal replication initiator protein DnaA from Rhodopseudomonas palustris (strain ATCC BAA-98 / CGA009).